We begin with the raw amino-acid sequence, 918 residues long: Serine/threonine-protein kinase D1 (918 aa).

Y93 is subject to Phosphotyrosine. The segment at 144-194 (PHALFVHSYRAPAFCDHCGEMLWGLVRQGLKCEGCGLNYHKRCAFKIPNNC) adopts a Phorbol-ester/DAG-type 1 zinc-finger fold. A phosphoserine mark is found at S203, S206, S217, and S221. The Phorbol-ester/DAG-type 2 zinc finger occupies 276-326 (PHTFVIHSYTRPTVCQFCKKLLKGLFRQGLQCKDCRFNCHKRCAPKVPNNC). Disordered regions lie at residues 338–362 (SPGA…NSGL) and 379–410 (AEGQ…SNNI). The segment covering 345-355 (VVMEEGSDDND) has biased composition (acidic residues). Position 351 is a phosphoserine (S351). The segment covering 400-410 (RTISPSTSNNI) has biased composition (polar residues). Residues S403 and S407 each carry the phosphoserine; by MAPK13 modification. Residues 428–547 (TVMKEGWMVH…WEVAIQHALM (120 aa)) form the PH domain. Y438 carries the phosphotyrosine modification. S454 is subject to Phosphoserine. Y469 is subject to Phosphotyrosine; by ABL. Y508 carries the post-translational modification Phosphotyrosine. Residue S554 is modified to Phosphoserine. Positions 589-845 (IFPDEVLGSG…VDKTLSHPWL (257 aa)) constitute a Protein kinase domain. ATP contacts are provided by residues 595–603 (LGSGQFGIV) and K618. D712 serves as the catalytic Proton acceptor. Residue S744 is modified to Phosphoserine; by PKC/PRKCD. Phosphoserine; by autocatalysis and PKC/PRKCD is present on S748. Y755 carries the post-translational modification Phosphotyrosine. Residue S916 is modified to Phosphoserine; by autocatalysis.

This sequence belongs to the protein kinase superfamily. CAMK Ser/Thr protein kinase family. PKD subfamily. Interacts (via N-terminus) with ADAP1/CENTA1. Interacts with MAPK13. Interacts with DAPK1 in an oxidative stress-regulated manner. Interacts with USP28; the interaction induces phosphorylation of USP28 and activated KRAS-mediated stabilization of ZNF304. Interacts with AKAP13 (via C-terminal domain). It depends on Mg(2+) as a cofactor. Post-translationally, phosphorylated at Ser-403 and Ser-407 by MAPK13 during regulation of insulin secretion in pancreatic beta cells. Phosphorylated by DAPK1. Phosphorylated at Tyr-93 and by ABL at Tyr-469, which primes the kinase in response to oxidative stress, and promotes a second step activating phosphorylation at Ser-744/Ser-748 by PKRD. Phosphorylated at Ser-916 upon S.enterica infection in macrophages.

Its subcellular location is the cytoplasm. It is found in the cell membrane. It localises to the golgi apparatus. The protein localises to the trans-Golgi network. The enzyme catalyses L-seryl-[protein] + ATP = O-phospho-L-seryl-[protein] + ADP + H(+). The catalysed reaction is L-threonyl-[protein] + ATP = O-phospho-L-threonyl-[protein] + ADP + H(+). Its activity is regulated as follows. Activated by DAG and phorbol esters. Phorbol-ester/DAG-type domain 1 binds DAG with high affinity and appears to play the dominant role in mediating translocation to the cell membrane and trans-Golgi network. Phorbol-ester/DAG-type domain 2 binds phorbol ester with higher affinity. Autophosphorylation of Ser-748 and phosphorylation of Ser-744 by PKC relieves auto-inhibition by the PH domain. Phosphorylation on Tyr-469 by the SRC-ABL1 pathway in response to oxidative stress, is also required for activation. Activated by DAPK1 under oxidative stress. Functionally, serine/threonine-protein kinase that converts transient diacylglycerol (DAG) signals into prolonged physiological effects downstream of PKC, and is involved in the regulation of MAPK8/JNK1 and Ras signaling, Golgi membrane integrity and trafficking, cell survival through NF-kappa-B activation, cell migration, cell differentiation by mediating HDAC7 nuclear export, cell proliferation via MAPK1/3 (ERK1/2) signaling, and plays a role in cardiac hypertrophy, VEGFA-induced angiogenesis, genotoxic-induced apoptosis and flagellin-stimulated inflammatory response. Phosphorylates the epidermal growth factor receptor (EGFR) on dual threonine residues, which leads to the suppression of epidermal growth factor (EGF)-induced MAPK8/JNK1 activation and subsequent JUN phosphorylation. Phosphorylates RIN1, inducing RIN1 binding to 14-3-3 proteins YWHAB, YWHAE and YWHAZ and increased competition with RAF1 for binding to GTP-bound form of Ras proteins (NRAS, HRAS and KRAS). Acts downstream of the heterotrimeric G-protein beta/gamma-subunit complex to maintain the structural integrity of the Golgi membranes, and is required for protein transport along the secretory pathway. In the trans-Golgi network (TGN), regulates the fission of transport vesicles that are on their way to the plasma membrane. May act by activating the lipid kinase phosphatidylinositol 4-kinase beta (PI4KB) at the TGN for the local synthesis of phosphorylated inositol lipids, which induces a sequential production of DAG, phosphatidic acid (PA) and lyso-PA (LPA) that are necessary for membrane fission and generation of specific transport carriers to the cell surface. Under oxidative stress, is phosphorylated at Tyr-469 via SRC-ABL1 and contributes to cell survival by activating IKK complex and subsequent nuclear translocation and activation of NFKB1. Involved in cell migration by regulating integrin alpha-5/beta-3 recycling and promoting its recruitment in newly forming focal adhesion. In osteoblast differentiation, mediates the bone morphogenetic protein 2 (BMP2)-induced nuclear export of HDAC7, which results in the inhibition of HDAC7 transcriptional repression of RUNX2. In neurons, plays an important role in neuronal polarity by regulating the biogenesis of TGN-derived dendritic vesicles, and is involved in the maintenance of dendritic arborization and Golgi structure in hippocampal cells. May potentiate mitogenesis induced by the neuropeptide bombesin or vasopressin by mediating an increase in the duration of MAPK1/3 (ERK1/2) signaling, which leads to accumulation of immediate-early gene products including FOS that stimulate cell cycle progression. Plays an important role in the proliferative response induced by low calcium in keratinocytes, through sustained activation of MAPK1/3 (ERK1/2) pathway. Downstream of novel PKC signaling, plays a role in cardiac hypertrophy by phosphorylating HDAC5, which in turn triggers XPO1/CRM1-dependent nuclear export of HDAC5, MEF2A transcriptional activation and induction of downstream target genes that promote myocyte hypertrophy and pathological cardiac remodeling. Mediates cardiac troponin I (TNNI3) phosphorylation at the PKA sites, which results in reduced myofilament calcium sensitivity, and accelerated crossbridge cycling kinetics. The PRKD1-HDAC5 pathway is also involved in angiogenesis by mediating VEGFA-induced specific subset of gene expression, cell migration, and tube formation. In response to VEGFA, is necessary and required for HDAC7 phosphorylation which induces HDAC7 nuclear export and endothelial cell proliferation and migration. During apoptosis induced by cytarabine and other genotoxic agents, PRKD1 is cleaved by caspase-3 at Asp-378, resulting in activation of its kinase function and increased sensitivity of cells to the cytotoxic effects of genotoxic agents. In epithelial cells, is required for transducing flagellin-stimulated inflammatory responses by binding and phosphorylating TLR5, which contributes to MAPK14/p38 activation and production of inflammatory cytokines. Acts as an activator of NLRP3 inflammasome assembly by mediating phosphorylation of NLRP3. May play a role in inflammatory response by mediating activation of NF-kappa-B. May be involved in pain transmission by directly modulating TRPV1 receptor. Plays a role in activated KRAS-mediated stabilization of ZNF304 in colorectal cancer (CRC) cells. Regulates nuclear translocation of transcription factor TFEB in macrophages upon live S.enterica infection. The protein is Serine/threonine-protein kinase D1 (Prkd1) of Mus musculus (Mouse).